Consider the following 624-residue polypeptide: Threonine--tRNA ligase (624 aa).

The tract at residues 1 to 143 is editing domain; that stretch reads MRLLFIHADE…SRTVTPEAAE (143 aa). Residues 197–499 form a catalytic region; sequence AHVKLMREKE…EQEGKLPTLP (303 aa). Positions 289, 340, and 467 each coordinate Zn(2+). Positions 598-624 are disordered; the sequence is LERETEGKPRVPLTIPDRLSRRPRFGR.

This sequence belongs to the class-II aminoacyl-tRNA synthetase family. As to quaternary structure, homodimer. Zn(2+) serves as cofactor.

Its subcellular location is the cytoplasm. It catalyses the reaction tRNA(Thr) + L-threonine + ATP = L-threonyl-tRNA(Thr) + AMP + diphosphate + H(+). Its function is as follows. Catalyzes the attachment of threonine to tRNA(Thr) in a two-step reaction: L-threonine is first activated by ATP to form Thr-AMP and then transferred to the acceptor end of tRNA(Thr). Also edits incorrectly charged L-seryl-tRNA(Thr). The chain is Threonine--tRNA ligase from Methanopyrus kandleri (strain AV19 / DSM 6324 / JCM 9639 / NBRC 100938).